A 554-amino-acid polypeptide reads, in one-letter code: Glucose-6-phosphate isomerase 1 (554 aa).

The active-site Proton donor is Glu-359. Catalysis depends on residues His-390 and Lys-518.

The protein belongs to the GPI family.

The protein localises to the cytoplasm. It catalyses the reaction alpha-D-glucose 6-phosphate = beta-D-fructose 6-phosphate. The protein operates within carbohydrate biosynthesis; gluconeogenesis. It participates in carbohydrate degradation; glycolysis; D-glyceraldehyde 3-phosphate and glycerone phosphate from D-glucose: step 2/4. In terms of biological role, catalyzes the reversible isomerization of glucose-6-phosphate to fructose-6-phosphate. The polypeptide is Glucose-6-phosphate isomerase 1 (Pseudomonas putida (strain ATCC 47054 / DSM 6125 / CFBP 8728 / NCIMB 11950 / KT2440)).